A 342-amino-acid chain; its full sequence is MKALAKLERGPGLTLTRVKRPEVGHNDVLIKIRRTAICGTDIHIWKWDDWAQKTIPVPMHVGHEYVGEIVEMGQEVRGFAIGDRVSGEGHITCGFCRNCRAGRRHLCRNTVGVGVNREGAFAEYLAIPAFNAFKIPPEISDDLASIFDPFGNATHTALSFNLVGEDVLITGAGPIGIMAVAIAKHVGARNVVITDINDYRLELARKMGATRAVNVARESLRDVMADLHMTEGFDVGLEMSGVPSAFTSLLEAMNHGGKVALLGIPPAQTAIDWNQVIFKGLEIKGIYGREMFETWYKMVAMLQSGLDLSPIITHRFAADDYEQGFAAMLSGESGKVILDWTA.

Cys-38 serves as a coordination point for Zn(2+). Catalysis depends on charge relay system residues Thr-40 and His-43. Zn(2+) contacts are provided by His-63, Glu-64, Cys-93, Cys-96, Cys-99, and Cys-107. Residues Ile-175, Asp-195, Arg-200, 262–264, and 286–287 contribute to the NAD(+) site; these read LGI and IY.

The protein belongs to the zinc-containing alcohol dehydrogenase family. Homotetramer. Zn(2+) is required as a cofactor.

It is found in the cytoplasm. The catalysed reaction is L-threonine + NAD(+) = (2S)-2-amino-3-oxobutanoate + NADH + H(+). Its pathway is amino-acid degradation; L-threonine degradation via oxydo-reductase pathway; glycine from L-threonine: step 1/2. Catalyzes the NAD(+)-dependent oxidation of L-threonine to 2-amino-3-ketobutyrate. This is L-threonine 3-dehydrogenase from Burkholderia cenocepacia (strain HI2424).